The following is a 75-amino-acid chain: M-myrmeciitoxin-Mp2a (75 aa).

A signal peptide spans methionine 1–alanine 26. Positions lysine 27–proline 48 are excised as a propeptide. Leucine amide is present on leucine 74.

The protein belongs to the formicidae venom precursor-01 superfamily. Ant pilosulin family. As to quaternary structure, heterodimer with M-MIITX-Mp2b (pilosin-3b) (AC P0C023); disulfide-linked. Only heterodimers (and not monomers) have been identified in the venom. As to expression, expressed by the venom gland.

It localises to the secreted. Heterodimer protein that may serve both defensive (pain-inducing) and predatory (insecticidal) roles. Has membrane-disrupting activity and shows induction of non-specific calcium influx into cells,. Shows broad-spectrum activity against a diverse range of bacteria, and cell lines, as well as hemolytic activity (EC(50)=2.18 uM). In vivo, shows moderate insecticidal activity against D.melanogaster and potent anthelmintic activity against the veterinary nematode H.contortus. In addition, intraplantar injection into mice induces nocifensive behavior and mechanical allodynia. The protein is M-myrmeciitoxin-Mp2a of Myrmecia pilosula (Jack jumper ant).